We begin with the raw amino-acid sequence, 318 residues long: tRNA uridine(34) hydroxylase (318 aa).

Positions 123 to 217 constitute a Rhodanese domain; it reads EDDDTVIIDA…YGKDPETKGQ (95 aa). Cys177 serves as the catalytic Cysteine persulfide intermediate.

The protein belongs to the TrhO family.

The catalysed reaction is uridine(34) in tRNA + AH2 + O2 = 5-hydroxyuridine(34) in tRNA + A + H2O. Functionally, catalyzes oxygen-dependent 5-hydroxyuridine (ho5U) modification at position 34 in tRNAs. The chain is tRNA uridine(34) hydroxylase from Staphylococcus aureus (strain bovine RF122 / ET3-1).